Here is a 96-residue protein sequence, read N- to C-terminus: DNA-binding protein Saci_1468 (96 aa).

This sequence belongs to the PDCD5 family.

The chain is DNA-binding protein Saci_1468 from Sulfolobus acidocaldarius (strain ATCC 33909 / DSM 639 / JCM 8929 / NBRC 15157 / NCIMB 11770).